We begin with the raw amino-acid sequence, 439 residues long: Xylose isomerase (439 aa).

Catalysis depends on residues His-100 and Asp-103. Positions 231, 267, 270, 295, 306, 308, and 338 each coordinate Mg(2+).

Belongs to the xylose isomerase family. Homotetramer. The cofactor is Mg(2+).

Its subcellular location is the cytoplasm. The catalysed reaction is alpha-D-xylose = alpha-D-xylulofuranose. The polypeptide is Xylose isomerase (Rhodopirellula baltica (strain DSM 10527 / NCIMB 13988 / SH1)).